We begin with the raw amino-acid sequence, 154 residues long: Large ribosomal subunit protein bL9c (154 aa).

This sequence belongs to the bacterial ribosomal protein bL9 family.

The protein resides in the plastid. Its subcellular location is the chloroplast. Binds to the 23S rRNA. This is Large ribosomal subunit protein bL9c from Gracilaria tenuistipitata var. liui (Red alga).